Here is a 356-residue protein sequence, read N- to C-terminus: Probable cytosolic iron-sulfur protein assembly protein 1 (356 aa).

6 WD repeats span residues 34 to 73 (GHKRTVRSVAWSPNGEVLATASFDSTVGLWERIPENIRAE), 89 to 128 (GHDSECKSVAFSYNGNLLASCGRDKSVWVWEAQPDADYEC), 134 to 173 (EHSQDVKCVIWHPKEEILASASYDNTIKMYVDDPSCDWYC), 179 to 218 (AHSSTVWSLSFSPCGQFLASSSDDMTIWIWRRVSAAECVE), 244 to 291 (HFSG…ATLR), and 319 to 356 (AHGSVDVNCVKWAPMNTDGSAPTMIASAGDDGEIRIWT).

It belongs to the WD repeat CIA1 family.

Functionally, essential component of the cytosolic iron-sulfur (Fe/S) protein assembly machinery. Required for the maturation of extramitochondrial Fe/S proteins. The sequence is that of Probable cytosolic iron-sulfur protein assembly protein 1 from Malassezia globosa (strain ATCC MYA-4612 / CBS 7966) (Dandruff-associated fungus).